The sequence spans 346 residues: Probable dual-specificity RNA methyltransferase RlmN (346 aa).

Residue Glu91 is the Proton acceptor of the active site. Positions 97 to 325 constitute a Radical SAM core domain; the sequence is TEKRLTVCVS…VSVRYSKGLE (229 aa). A disulfide bridge links Cys104 with Cys330. Residues Cys111, Cys115, and Cys118 each contribute to the [4Fe-4S] cluster site. S-adenosyl-L-methionine is bound by residues 158-159, Ser188, 211-213, and Asn287; these read GE and SLH. Residue Cys330 is the S-methylcysteine intermediate of the active site.

The protein belongs to the radical SAM superfamily. RlmN family. It depends on [4Fe-4S] cluster as a cofactor.

It is found in the cytoplasm. It carries out the reaction adenosine(2503) in 23S rRNA + 2 reduced [2Fe-2S]-[ferredoxin] + 2 S-adenosyl-L-methionine = 2-methyladenosine(2503) in 23S rRNA + 5'-deoxyadenosine + L-methionine + 2 oxidized [2Fe-2S]-[ferredoxin] + S-adenosyl-L-homocysteine. The catalysed reaction is adenosine(37) in tRNA + 2 reduced [2Fe-2S]-[ferredoxin] + 2 S-adenosyl-L-methionine = 2-methyladenosine(37) in tRNA + 5'-deoxyadenosine + L-methionine + 2 oxidized [2Fe-2S]-[ferredoxin] + S-adenosyl-L-homocysteine. In terms of biological role, specifically methylates position 2 of adenine 2503 in 23S rRNA and position 2 of adenine 37 in tRNAs. This Picosynechococcus sp. (strain ATCC 27264 / PCC 7002 / PR-6) (Agmenellum quadruplicatum) protein is Probable dual-specificity RNA methyltransferase RlmN.